Consider the following 89-residue polypeptide: uncharacterized protein (89 aa).

The N-terminal stretch at 1-19 is a signal peptide; it reads MIVRTLLIAAALLGGTAQA.

The protein resides in the secreted. This is an uncharacterized protein from Pseudomonas aeruginosa (strain UCBPP-PA14).